The primary structure comprises 330 residues: Beta-ketoacyl-[acyl-carrier-protein] synthase III (330 aa).

Catalysis depends on residues cysteine 115 and histidine 255. The tract at residues 256–260 (QANFR) is ACP-binding. The active site involves asparagine 285.

Belongs to the thiolase-like superfamily. FabH family. Homodimer.

It localises to the cytoplasm. It carries out the reaction malonyl-[ACP] + acetyl-CoA + H(+) = 3-oxobutanoyl-[ACP] + CO2 + CoA. It functions in the pathway lipid metabolism; fatty acid biosynthesis. Catalyzes the condensation reaction of fatty acid synthesis by the addition to an acyl acceptor of two carbons from malonyl-ACP. Catalyzes the first condensation reaction which initiates fatty acid synthesis and may therefore play a role in governing the total rate of fatty acid production. Possesses both acetoacetyl-ACP synthase and acetyl transacylase activities. Its substrate specificity determines the biosynthesis of branched-chain and/or straight-chain of fatty acids. This Helicobacter pylori (strain G27) protein is Beta-ketoacyl-[acyl-carrier-protein] synthase III.